Reading from the N-terminus, the 313-residue chain is 3'-5' exoribonuclease YhaM (313 aa).

Residues 163 to 279 (HVVSMLRLAK…LHQIDLMDAS (117 aa)) enclose the HD domain.

This sequence belongs to the YhaM family.

Its function is as follows. Shows a 3'-5' exoribonuclease activity. The protein is 3'-5' exoribonuclease YhaM of Listeria welshimeri serovar 6b (strain ATCC 35897 / DSM 20650 / CCUG 15529 / CIP 8149 / NCTC 11857 / SLCC 5334 / V8).